The chain runs to 265 residues: MIESQRHSYHLVDPSPWPISGSLGALATTVGGVMYMHSFQGGATLLSLGLIFLLYTMFVWWRDVLRESTLEGHHTKAVQLGPRYGSILFIVSEVMFLFAFFWASSHSSLAPTVEIGGIWPPKGIGVLDPWEIPLLNTPILPSSGAAVTWAHHAILAGKEKRAVYALVATVSLALVSTGFQGMEYYQAPSTISDSIYGSTFFLATGFHGFHVIIGTLFLIVCGIRQYLGLMTKKHHVGFEAAAWYWHFVDVVRLFPFVSIYWWGGI.

The next 6 helical transmembrane spans lie at 16-36 (PWPI…VMYM), 41-61 (GGAT…FVWW), 84-104 (YGSI…FWAS), 162-182 (AVYA…FQGM), 200-220 (FFLA…FLIV), and 245-265 (WHFV…WGGI).

Belongs to the cytochrome c oxidase subunit 3 family. As to quaternary structure, component of the cytochrome c oxidase (complex IV, CIV), a multisubunit enzyme composed of a catalytic core of 3 subunits and several supernumerary subunits. The complex exists as a monomer or a dimer and forms supercomplexes (SCs) in the inner mitochondrial membrane with ubiquinol-cytochrome c oxidoreductase (cytochrome b-c1 complex, complex III, CIII).

It is found in the mitochondrion inner membrane. The catalysed reaction is 4 Fe(II)-[cytochrome c] + O2 + 8 H(+)(in) = 4 Fe(III)-[cytochrome c] + 2 H2O + 4 H(+)(out). Functionally, component of the cytochrome c oxidase, the last enzyme in the mitochondrial electron transport chain which drives oxidative phosphorylation. The respiratory chain contains 3 multisubunit complexes succinate dehydrogenase (complex II, CII), ubiquinol-cytochrome c oxidoreductase (cytochrome b-c1 complex, complex III, CIII) and cytochrome c oxidase (complex IV, CIV), that cooperate to transfer electrons derived from NADH and succinate to molecular oxygen, creating an electrochemical gradient over the inner membrane that drives transmembrane transport and the ATP synthase. Cytochrome c oxidase is the component of the respiratory chain that catalyzes the reduction of oxygen to water. Electrons originating from reduced cytochrome c in the intermembrane space (IMS) are transferred via the dinuclear copper A center (CU(A)) of subunit 2 and heme A of subunit 1 to the active site in subunit 1, a binuclear center (BNC) formed by heme A3 and copper B (CU(B)). The BNC reduces molecular oxygen to 2 water molecules using 4 electrons from cytochrome c in the IMS and 4 protons from the mitochondrial matrix. The protein is Cytochrome c oxidase subunit 3 (COX3) of Aegilops columnaris (Goatgrass).